The following is a 705-amino-acid chain: Elongation factor G (705 aa).

In terms of domain architecture, tr-type G spans 8-294 (ELYRNFGIMA…SVIDYLPSPL (287 aa)). Residues 17-24 (AHIDAGKT), 92-96 (DTPGH), and 146-149 (NKMD) contribute to the GTP site.

It belongs to the TRAFAC class translation factor GTPase superfamily. Classic translation factor GTPase family. EF-G/EF-2 subfamily.

The protein resides in the cytoplasm. Its function is as follows. Catalyzes the GTP-dependent ribosomal translocation step during translation elongation. During this step, the ribosome changes from the pre-translocational (PRE) to the post-translocational (POST) state as the newly formed A-site-bound peptidyl-tRNA and P-site-bound deacylated tRNA move to the P and E sites, respectively. Catalyzes the coordinated movement of the two tRNA molecules, the mRNA and conformational changes in the ribosome. The sequence is that of Elongation factor G from Cereibacter sphaeroides (strain KD131 / KCTC 12085) (Rhodobacter sphaeroides).